A 375-amino-acid chain; its full sequence is Alcohol dehydrogenase 1B (375 aa).

At Ser1 the chain carries N-acetylserine. Zn(2+)-binding residues include Cys46, His67, Cys97, Cys100, Cys103, Cys111, and Cys174. Residues 199-204, Asp223, Lys228, 293-295, and Arg370 contribute to the NAD(+) site; these read GLGGVG and VGV.

Belongs to the zinc-containing alcohol dehydrogenase family. Class-I subfamily. As to quaternary structure, multimeric (with different ratios of monomers). The cofactor is Zn(2+).

Its subcellular location is the cytoplasm. The enzyme catalyses a primary alcohol + NAD(+) = an aldehyde + NADH + H(+). It carries out the reaction a secondary alcohol + NAD(+) = a ketone + NADH + H(+). The chain is Alcohol dehydrogenase 1B from Saara hardwickii (Indian spiny-tailed lizard).